The following is a 280-amino-acid chain: Digeranylgeranylglyceryl phosphate synthase (280 aa).

9 helical membrane passes run 4-24 (AAYL…AGIL), 27-47 (IIAT…VLTI), 83-103 (LMYA…FTPL), 104-124 (PLAG…SFLK), 128-148 (LIGN…GGAI), 150-170 (GTQG…VMLA), 199-219 (ATIY…LLLY), 222-242 (WGAF…FGAI), and 260-280 (KILK…AVLL).

Belongs to the UbiA prenyltransferase family. DGGGP synthase subfamily. It depends on Mg(2+) as a cofactor.

The protein resides in the cell membrane. It carries out the reaction sn-3-O-(geranylgeranyl)glycerol 1-phosphate + (2E,6E,10E)-geranylgeranyl diphosphate = 2,3-bis-O-(geranylgeranyl)-sn-glycerol 1-phosphate + diphosphate. The protein operates within membrane lipid metabolism; glycerophospholipid metabolism. In terms of biological role, prenyltransferase that catalyzes the transfer of the geranylgeranyl moiety of geranylgeranyl diphosphate (GGPP) to the C2 hydroxyl of (S)-3-O-geranylgeranylglyceryl phosphate (GGGP). This reaction is the second ether-bond-formation step in the biosynthesis of archaeal membrane lipids. The polypeptide is Digeranylgeranylglyceryl phosphate synthase (Methanospirillum hungatei JF-1 (strain ATCC 27890 / DSM 864 / NBRC 100397 / JF-1)).